A 440-amino-acid polypeptide reads, in one-letter code: Gap junction gamma-2 protein (440 aa).

At 1 to 21 the chain is on the cytoplasmic side; it reads MTNMSWSFLTRLLEEIHNHST. A helical membrane pass occupies residues 22–42; the sequence is FVGKVWLTVLVVFRIVLTAVG. Residues 43–78 are Extracellular-facing; the sequence is GESIYSDEQSKFTCNTRQPGCDNVCYDAFAPLSHVR. Residues 79 to 99 form a helical membrane-spanning segment; that stretch reads FWVFQIVVISTPSVMYLGYAV. The Cytoplasmic portion of the chain corresponds to 100 to 223; the sequence is HRLARASEQE…AQLVVRAAFE (124 aa). The segment at 108–199 is disordered; sequence QERRRALRRR…TPGPAGQHDG (92 aa). The segment covering 112-124 has biased composition (basic residues); sequence RALRRRPGTRRLP. The segment covering 136–149 has biased composition (low complexity); it reads PDTTDLGEAEPILA. Over residues 150 to 173 the composition is skewed to acidic residues; it reads LEEDEDEEPGAPEGPGEDTEEERA. Residues 224 to 244 form a helical membrane-spanning segment; the sequence is VAFLVGQYLLYGFEVPPFFAC. The Extracellular segment spans residues 245–264; sequence SRQPCPHVVDCFVSRPTEKT. Residues 265–285 traverse the membrane as a helical segment; sequence VFLLVMYVVSCLCLLLNLCEM. Over 286-440 the chain is Cytoplasmic; the sequence is AHLGLGSAQD…SRDGKATVWI (155 aa). Residues 369–440 form a disordered region; sequence DRDSPPCAGL…SRDGKATVWI (72 aa). Position 372 is a phosphoserine (Ser-372). Over residues 388–401 the composition is skewed to low complexity; that stretch reads VGGLASGTGSATSG.

This sequence belongs to the connexin family. Gamma-type subfamily. As to quaternary structure, a connexon is composed of a hexamer of connexins. Interacts with TJP1. As to expression, mainly expressed by oligodendrocytes in the central nervous system (at protein level).

The protein resides in the cell membrane. The protein localises to the cell junction. It localises to the gap junction. Its function is as follows. One gap junction consists of a cluster of closely packed pairs of transmembrane channels, the connexons, through which materials of low MW diffuse from one cell to a neighboring cell. May play a role in myelination in central and peripheral nervous systems. The protein is Gap junction gamma-2 protein (Gjc2) of Mus musculus (Mouse).